The following is a 347-amino-acid chain: Methylthioribose-1-phosphate isomerase (347 aa).

Substrate contacts are provided by residues 45–47, arginine 88, and glutamine 197; that span reads RGA. The active-site Proton donor is aspartate 238. Residue 248–249 coordinates substrate; the sequence is NK.

It belongs to the eIF-2B alpha/beta/delta subunits family. MtnA subfamily.

It carries out the reaction 5-(methylsulfanyl)-alpha-D-ribose 1-phosphate = 5-(methylsulfanyl)-D-ribulose 1-phosphate. Its pathway is amino-acid biosynthesis; L-methionine biosynthesis via salvage pathway; L-methionine from S-methyl-5-thio-alpha-D-ribose 1-phosphate: step 1/6. In terms of biological role, catalyzes the interconversion of methylthioribose-1-phosphate (MTR-1-P) into methylthioribulose-1-phosphate (MTRu-1-P). This is Methylthioribose-1-phosphate isomerase from Nostoc sp. (strain PCC 7120 / SAG 25.82 / UTEX 2576).